Here is a 193-residue protein sequence, read N- to C-terminus: Probable gluconokinase (193 aa).

Residue 21–28 (GPAGSGKT) participates in ATP binding.

This sequence belongs to the gluconokinase GntK/GntV family.

It catalyses the reaction D-gluconate + ATP = 6-phospho-D-gluconate + ADP + H(+). It functions in the pathway carbohydrate acid metabolism; D-gluconate degradation. This is Probable gluconokinase from Schizosaccharomyces pombe (strain 972 / ATCC 24843) (Fission yeast).